A 350-amino-acid polypeptide reads, in one-letter code: Pleckstrin (350 aa).

A PH 1 domain is found at 4–101 (KRIREGYLVK…WVRDIKKAIK (98 aa)). Lys64 carries the post-translational modification N6-acetyllysine. 2 positions are modified to phosphoserine: Ser113 and Ser117. The region spanning 136–221 (PEKGIKELNL…SPDAFYYFPD (86 aa)) is the DEP domain. One can recognise a PH 2 domain in the interval 244-347 (VIIKQGCLLK…WIKAIQVASR (104 aa)).

Functionally, major protein kinase C substrate of platelets. The sequence is that of Pleckstrin (Plek) from Mus musculus (Mouse).